The primary structure comprises 184 residues: Adenylate kinase 2 (184 aa).

ATP is bound at residue 10–15; that stretch reads GSGKST. An NMP region spans residues 30 to 59; that stretch reads STGEILREAISHLSELGRHAQPYMIKGELV. AMP-binding positions include Thr-31, Arg-36, 57–59, 85–88, and Gln-92; these read ELV and GYPR. Residues 126 to 132 form an LID region; that stretch reads GRSLPDD. Position 127 (Arg-127) interacts with ATP. Arg-140 lines the AMP pocket. Gln-168 is an ATP binding site.

This sequence belongs to the adenylate kinase family. As to quaternary structure, monomer.

It is found in the cytoplasm. The catalysed reaction is AMP + ATP = 2 ADP. Its pathway is purine metabolism; AMP biosynthesis via salvage pathway; AMP from ADP: step 1/1. Functionally, catalyzes the reversible transfer of the terminal phosphate group between ATP and AMP. Plays an important role in cellular energy homeostasis and in adenine nucleotide metabolism. The chain is Adenylate kinase 2 from Nostoc sp. (strain PCC 7120 / SAG 25.82 / UTEX 2576).